The following is a 458-amino-acid chain: tRNA modification GTPase MnmE (458 aa).

(6S)-5-formyl-5,6,7,8-tetrahydrofolate-binding residues include Arg-22, Glu-84, and Arg-123. The TrmE-type G domain occupies 220-379; it reads GIATAIIGRP…LEKAIADLFF (160 aa). Asn-230 serves as a coordination point for K(+). GTP-binding positions include 230–235, 249–255, and 274–277; these read NVGKSS, TDIAGTT, and DTAG. Ser-234 provides a ligand contact to Mg(2+). 3 residues coordinate K(+): Thr-249, Ile-251, and Thr-254. Thr-255 contacts Mg(2+). Residue Lys-458 coordinates (6S)-5-formyl-5,6,7,8-tetrahydrofolate.

Belongs to the TRAFAC class TrmE-Era-EngA-EngB-Septin-like GTPase superfamily. TrmE GTPase family. In terms of assembly, homodimer. Heterotetramer of two MnmE and two MnmG subunits. The cofactor is K(+).

It localises to the cytoplasm. Its function is as follows. Exhibits a very high intrinsic GTPase hydrolysis rate. Involved in the addition of a carboxymethylaminomethyl (cmnm) group at the wobble position (U34) of certain tRNAs, forming tRNA-cmnm(5)s(2)U34. The polypeptide is tRNA modification GTPase MnmE (Bacillus cereus (strain ZK / E33L)).